Consider the following 510-residue polypeptide: D-alanine--D-alanyl carrier protein ligase (510 aa).

Thr157–Ser158 serves as a coordination point for ATP. Asp202 lines the D-alanine pocket. ATP is bound at residue Asn297–Thr302. A D-alanine-binding site is contributed by Val306. 2 residues coordinate ATP: Asp389 and Lys498. Lys498 serves as a coordination point for D-alanine.

This sequence belongs to the ATP-dependent AMP-binding enzyme family. DltA subfamily.

The protein localises to the cytoplasm. The catalysed reaction is holo-[D-alanyl-carrier protein] + D-alanine + ATP = D-alanyl-[D-alanyl-carrier protein] + AMP + diphosphate. Its pathway is cell wall biogenesis; lipoteichoic acid biosynthesis. Its function is as follows. Catalyzes the first step in the D-alanylation of lipoteichoic acid (LTA), the activation of D-alanine and its transfer onto the D-alanyl carrier protein (Dcp) DltC. In an ATP-dependent two-step reaction, forms a high energy D-alanyl-AMP intermediate, followed by transfer of the D-alanyl residue as a thiol ester to the phosphopantheinyl prosthetic group of the Dcp. D-alanylation of LTA plays an important role in modulating the properties of the cell wall in Gram-positive bacteria, influencing the net charge of the cell wall. This is D-alanine--D-alanyl carrier protein ligase from Listeria monocytogenes serovar 1/2a (strain ATCC BAA-679 / EGD-e).